The sequence spans 214 residues: Pyridoxine/pyridoxamine 5'-phosphate oxidase (214 aa).

Residues 8 to 11 and Lys-66 contribute to the substrate site; that span reads RINY. FMN contacts are provided by residues 61–66, 76–77, Arg-82, Lys-83, and Gln-105; these read RIVLIK and FT. Positions 123, 127, and 131 each coordinate substrate. FMN is bound by residues 140–141 and Trp-184; that span reads QS. 190-192 lines the substrate pocket; sequence RLH. Arg-194 provides a ligand contact to FMN.

Belongs to the pyridoxamine 5'-phosphate oxidase family. In terms of assembly, homodimer. Requires FMN as cofactor.

It catalyses the reaction pyridoxamine 5'-phosphate + O2 + H2O = pyridoxal 5'-phosphate + H2O2 + NH4(+). The enzyme catalyses pyridoxine 5'-phosphate + O2 = pyridoxal 5'-phosphate + H2O2. It functions in the pathway cofactor metabolism; pyridoxal 5'-phosphate salvage; pyridoxal 5'-phosphate from pyridoxamine 5'-phosphate: step 1/1. Its pathway is cofactor metabolism; pyridoxal 5'-phosphate salvage; pyridoxal 5'-phosphate from pyridoxine 5'-phosphate: step 1/1. In terms of biological role, catalyzes the oxidation of either pyridoxine 5'-phosphate (PNP) or pyridoxamine 5'-phosphate (PMP) into pyridoxal 5'-phosphate (PLP). This is Pyridoxine/pyridoxamine 5'-phosphate oxidase from Burkholderia cenocepacia (strain HI2424).